A 421-amino-acid chain; its full sequence is Zinc finger protein 584 (421 aa).

The 72-residue stretch at 17–88 folds into the KRAB domain; that stretch reads VMFEDVTVYF…SWVDVTPVSR (72 aa). The segment covering 120–129 has biased composition (basic and acidic residues); it reads QHQDTHSEGK. The segment at 120 to 146 is disordered; the sequence is QHQDTHSEGKPRRHTEHGAAFPPGSSC. 8 consecutive C2H2-type zinc fingers follow at residues 159–181, 214–236, 242–264, 270–292, 298–320, 326–348, 354–376, and 382–404; these read FKCSDCGKVFLKAFALLDHLITH, HVCNECGKAFSYPSKLRKHQKVH, FKCSDCGKTFNRKDALVLHQRIH, YECSKCGKTFSVLSTLIRHRKVH, YECTECGKFFKYNNSFILHQRVH, FECKQCGKGYVTRSGLYQHWKVH, YECSLCGKTFTTRSYRNRHQQFH, and YECTECGKAFKHSSTLLQHKKVH. A disordered region spans residues 402 to 421; the sequence is KVHTPERRQEDRAHGKVVSC. Residues 404–415 show a composition bias toward basic and acidic residues; sequence HTPERRQEDRAH.

The protein belongs to the krueppel C2H2-type zinc-finger protein family.

The protein localises to the nucleus. Its function is as follows. May be involved in transcriptional regulation. The sequence is that of Zinc finger protein 584 (ZNF584) from Homo sapiens (Human).